Here is a 507-residue protein sequence, read N- to C-terminus: Microcystinase C (507 aa).

An N-terminal signal peptide occupies residues 1-21 (MLDRRTLMGGILSMAGSKATG). Positions 167, 169, and 191 each coordinate Zn(2+).

Belongs to the peptidase M81 family. The cofactor is Zn(2+).

With respect to regulation, inhibited by the metal chelators EDTA and 1,10-phenanthroline. Involved in peptidolytic degradation of cyclic heptapeptide hepatotoxin microcystin (MC). Cleaves both linear MC and the tetrapeptide degradation product of MC. Cleaves the Adda-Glu peptide bond of linear MC heptapeptides. The polypeptide is Microcystinase C (Sphingomonas sp).